Here is a 294-residue protein sequence, read N- to C-terminus: 33 kDa chaperonin (294 aa).

2 disulfides stabilise this stretch: C239-C241 and C272-C275.

The protein belongs to the HSP33 family. Under oxidizing conditions two disulfide bonds are formed involving the reactive cysteines. Under reducing conditions zinc is bound to the reactive cysteines and the protein is inactive.

It localises to the cytoplasm. Its function is as follows. Redox regulated molecular chaperone. Protects both thermally unfolding and oxidatively damaged proteins from irreversible aggregation. Plays an important role in the bacterial defense system toward oxidative stress. This is 33 kDa chaperonin from Listeria monocytogenes serotype 4b (strain CLIP80459).